We begin with the raw amino-acid sequence, 337 residues long: RAD51-associated protein 1 (337 aa).

2 disordered regions span residues 1-69 and 88-337; these read MVRP…PPKK and LSVK…SQVR. Residues Ser-19 and Ser-23 each carry the phosphoserine modification. Polar residues predominate over residues 28–38; it reads ISSSTPVNKSK. Residues 32–50 form an interaction with DNA region; it reads TPVNKSKTVPKVLKQDKPK. The segment covering 44-69 has biased composition (basic and acidic residues); the sequence is LKQDKPKPNLKNLQKEEVLPTEPPKK. 2 positions are modified to phosphoserine: Ser-103 and Ser-107. A compositionally biased stretch (basic and acidic residues) spans 105-118; sequence EKSTDKQGKEKTEN. Residues 138–143 carry the SIM motif motif; it reads LDKITE. Positions 190–205 are enriched in acidic residues; that stretch reads SESDPDFDESKESDED. The interval 225–286 is interaction with DNA; sequence GEKKERKSKP…PSAESKRPKW (62 aa). Residue Lys-251 forms a Glycyl lysine isopeptide (Lys-Gly) (interchain with G-Cter in SUMO; alternate) linkage. Residue Lys-251 forms a Glycyl lysine isopeptide (Lys-Gly) (interchain with G-Cter in ubiquitin; alternate) linkage. Positions 286-289 match the WVPP motif motif; sequence WVPP. Residues 290–304 are compositionally biased toward low complexity; the sequence is AASGSRNSSSNALAG. The tract at residues 295–334 is interaction with RAD51; the sequence is RNSSSNALAGTPAKSPSQSLRLGLSRLAPVKRLHPSATSS. A Phosphoserine modification is found at Ser-309.

In terms of assembly, monomer; elongated monodisperse monomer. Interacts (via C-terminal region) with RAD51; the interaction is direct. Interacts (via SIM motif) with WDR48/UAF1; WDR48/UAF1 and RAD51AP1 cooperate together to stimulate RAD51-mediated homologous recombination (HR). Interacts (via WVPP motif) with DMC1; the interaction is direct. Interacts with PALB2. Interacts with RAD52. In terms of processing, sumoylation with SUMO2/3 by NSMCE2/MMS21 promotes stabilization, possibly by preventing ubiquitination. As to expression, most abundantly expressed in testis. Also expressed in spleen, thymus and bone marrow. Not detected in heart, kidney or liver.

The protein localises to the chromosome. The protein resides in the nucleus. Its subcellular location is the telomere. In terms of biological role, structure-specific DNA-binding protein involved in DNA repair by promoting RAD51-mediated homologous recombination. Acts by stimulating D-Loop formation by RAD51: specifically enhances joint molecule formation through its structure-specific DNA interaction and its interaction with RAD51. Binds single-stranded DNA (ssDNA), double-stranded DNA (dsDNA) and secondary DNA structures, such as D-loop structures: has a strong preference for branched-DNA structures that are obligatory intermediates during joint molecule formation. Cooperates with WDR48/UAF1 to stimulate RAD51-mediated homologous recombination: both WDR48/UAF1 and RAD51AP1 have coordinated role in DNA-binding during homologous recombination and DNA repair. WDR48/UAF1 and RAD51AP1 also have a coordinated role in DNA-binding to promote USP1-mediated deubiquitination of FANCD2. Also involved in meiosis by promoting DMC1-mediated homologous meiotic recombination. This is RAD51-associated protein 1 from Mus musculus (Mouse).